We begin with the raw amino-acid sequence, 347 residues long: D-alanine--D-alanine ligase (347 aa).

Positions 131–333 (KRVLESAGIA…YPDLIERLVE (203 aa)) constitute an ATP-grasp domain. Residue 161 to 216 (EEELTYPVFTKPSNMGSSVGISKSENQEELRQALKLAFQYDSRVLVEQGVNAREIE) participates in ATP binding. Mg(2+) contacts are provided by D287, E300, and N302.

This sequence belongs to the D-alanine--D-alanine ligase family. Requires Mg(2+) as cofactor. Mn(2+) is required as a cofactor.

It localises to the cytoplasm. It catalyses the reaction 2 D-alanine + ATP = D-alanyl-D-alanine + ADP + phosphate + H(+). Its pathway is cell wall biogenesis; peptidoglycan biosynthesis. In terms of biological role, cell wall formation. This is D-alanine--D-alanine ligase from Streptococcus pneumoniae (strain Hungary19A-6).